Reading from the N-terminus, the 433-residue chain is Monodehydroascorbate reductase (433 aa).

FAD contacts are provided by residues 13 to 16, Glu40, Arg47, Lys52, Ile95, and 146 to 147; these read GGVS and RE. NAD(+) is bound by residues 171–177, Glu195, Arg201, and Gly260; that span reads GGYIGLE. 173–177 is an NADP(+) binding site; sequence YIGLE. Residues Arg201 and Gly260 each contribute to the NADP(+) site. Asp297 serves as a coordination point for FAD. Residue 313–314 coordinates NAD(+); sequence EH. 313 to 314 lines the NADP(+) pocket; that stretch reads EH. Residue Val315 coordinates FAD. Arg319 contacts L-ascorbate. Position 348 (Tyr348) interacts with FAD. Tyr348 provides a ligand contact to NAD(+). Tyr348 serves as a coordination point for NADP(+). Arg350 is an L-ascorbate binding site.

It belongs to the FAD-dependent oxidoreductase family. The cofactor is FAD. In terms of tissue distribution, expressed in leaves, and to a lesser degree in stems, roots and all stages of fruit.

Its subcellular location is the cytoplasm. It catalyses the reaction 2 monodehydro-L-ascorbate radical + NADH + H(+) = 2 L-ascorbate + NAD(+). Catalyzes the conversion of monodehydroascorbate to ascorbate, oxidizing NADH in the process. This Solanum lycopersicum (Tomato) protein is Monodehydroascorbate reductase.